The chain runs to 126 residues: Large ribosomal subunit protein uL22 (126 aa).

This sequence belongs to the universal ribosomal protein uL22 family. As to quaternary structure, part of the 50S ribosomal subunit.

This protein binds specifically to 23S rRNA; its binding is stimulated by other ribosomal proteins, e.g. L4, L17, and L20. It is important during the early stages of 50S assembly. It makes multiple contacts with different domains of the 23S rRNA in the assembled 50S subunit and ribosome. In terms of biological role, the globular domain of the protein is located near the polypeptide exit tunnel on the outside of the subunit, while an extended beta-hairpin is found that lines the wall of the exit tunnel in the center of the 70S ribosome. The chain is Large ribosomal subunit protein uL22 from Ruegeria sp. (strain TM1040) (Silicibacter sp.).